Consider the following 497-residue polypeptide: MERNPISPLYAAIDLGSNSFHMWIVREVAGSVQTLAKIKRKVRLAAGLNSQNELSEEAMQRGWDCLSLFAERLQDIPAERVRIIGTAALRTAVNADIFLSKAKDILGSKVDVIPGEEEARIIYQGVAHTSGGSDKRLVVDIGGASTEVIIGEGFDASALTSLKIGCVTWLERYFKDRYLTAENFDAAIDAAKNAIEPIVEQYTQLGWETCVGASGTVQALQEIMLAQGMDEIITLSKLKRMQRQAMQYERLEDLDIEGLTLERALVFPSGLSILIAVFESLNIESMTLAGGALREGMVYEMMSKMRHHDVRERTLTSVQERFQLDTSHASAVTNTAMALLSRCDEEWQLEPQAQYLLHASVCLHEIGTSIEFKKSGEHAAYLINHIDLPGFTRAQKHLIAELLRRFREQLTSLPEQHALSAQNAARILRLLRLAVILCHRRDHNQQPPFSLSVAENKLVLTLPAAWLLANPLSHVELQQEATRQTDMGWPLVLEESE.

The protein belongs to the GppA/Ppx family. GppA subfamily.

The catalysed reaction is guanosine 3'-diphosphate 5'-triphosphate + H2O = guanosine 3',5'-bis(diphosphate) + phosphate + H(+). It participates in purine metabolism; ppGpp biosynthesis; ppGpp from GTP: step 2/2. Functionally, catalyzes the conversion of pppGpp to ppGpp. Guanosine pentaphosphate (pppGpp) is a cytoplasmic signaling molecule which together with ppGpp controls the 'stringent response', an adaptive process that allows bacteria to respond to amino acid starvation, resulting in the coordinated regulation of numerous cellular activities. The polypeptide is Guanosine-5'-triphosphate,3'-diphosphate pyrophosphatase (Photobacterium profundum (strain SS9)).